We begin with the raw amino-acid sequence, 305 residues long: tRNA pseudouridine synthase B (305 aa).

Catalysis depends on Asp-48, which acts as the Nucleophile.

The protein belongs to the pseudouridine synthase TruB family. Type 1 subfamily.

The catalysed reaction is uridine(55) in tRNA = pseudouridine(55) in tRNA. In terms of biological role, responsible for synthesis of pseudouridine from uracil-55 in the psi GC loop of transfer RNAs. In Stutzerimonas stutzeri (strain A1501) (Pseudomonas stutzeri), this protein is tRNA pseudouridine synthase B.